The chain runs to 93 residues: uncharacterized protein (93 aa).

This is an uncharacterized protein from Gallid herpesvirus 2 (strain Chicken/Md5/ATCC VR-987) (GaHV-2).